Reading from the N-terminus, the 78-residue chain is UPF0335 protein RPR_04100 (78 aa).

It belongs to the UPF0335 family.

This Rickettsia peacockii (strain Rustic) protein is UPF0335 protein RPR_04100.